The primary structure comprises 208 residues: Pectinesterase inhibitor 6 (208 aa).

A signal peptide spans 1-30; it reads MTSSSSSPITFTLLLLLSLLVALNPNPSLA. A disulfide bridge links Cys53 with Cys62. N-linked (GlcNAc...) asparagine glycans are attached at residues Asn54 and Asn75. Cys118 and Cys165 are disulfide-bonded.

The protein belongs to the PMEI family.

It localises to the secreted. It is found in the extracellular space. Its subcellular location is the apoplast. Functionally, pectin methylesterase (PME) inhibitor that targets PME from seeds and modulates PME activity and pectin methylesterification during seed germination. Promotes mucilage release by limiting methylesterification of homogalacturonan in seed coat epidermal cells. The chain is Pectinesterase inhibitor 6 from Arabidopsis thaliana (Mouse-ear cress).